Reading from the N-terminus, the 148-residue chain is Putative pre-16S rRNA nuclease (148 aa).

Belongs to the YqgF nuclease family.

The protein localises to the cytoplasm. Could be a nuclease involved in processing of the 5'-end of pre-16S rRNA. The sequence is that of Putative pre-16S rRNA nuclease from Nitrosomonas europaea (strain ATCC 19718 / CIP 103999 / KCTC 2705 / NBRC 14298).